The primary structure comprises 377 residues: Nitric oxide reductase FlRd-NAD(+) reductase (377 aa).

This sequence belongs to the FAD-dependent oxidoreductase family. Requires FAD as cofactor.

It localises to the cytoplasm. The enzyme catalyses 2 reduced [nitric oxide reductase rubredoxin domain] + NAD(+) + H(+) = 2 oxidized [nitric oxide reductase rubredoxin domain] + NADH. Its pathway is nitrogen metabolism; nitric oxide reduction. Its function is as follows. One of at least two accessory proteins for anaerobic nitric oxide (NO) reductase. Reduces the rubredoxin moiety of NO reductase. In Enterobacter sp. (strain 638), this protein is Nitric oxide reductase FlRd-NAD(+) reductase.